Consider the following 156-residue polypeptide: Small ribosomal subunit protein uS7 (156 aa).

Belongs to the universal ribosomal protein uS7 family. As to quaternary structure, part of the 30S ribosomal subunit. Contacts proteins S9 and S11.

One of the primary rRNA binding proteins, it binds directly to 16S rRNA where it nucleates assembly of the head domain of the 30S subunit. Is located at the subunit interface close to the decoding center, probably blocks exit of the E-site tRNA. The chain is Small ribosomal subunit protein uS7 from Chromohalobacter salexigens (strain ATCC BAA-138 / DSM 3043 / CIP 106854 / NCIMB 13768 / 1H11).